Reading from the N-terminus, the 166-residue chain is Thioredoxin, mitochondrial (166 aa).

The transit peptide at 1-59 (MAQRLLLRRFLTSVISRKPPQGVWASLTSTSLQTPPYNAGGLTGTPSPARTFHTTRVCS) directs the protein to the mitochondrion. One can recognise a Thioredoxin domain in the interval 61-166 (TFNVQDGPDF…LEAFLKKLIG (106 aa)). Residues cysteine 90 and cysteine 93 each act as nucleophile in the active site. Cysteine 90 and cysteine 93 are disulfide-bonded. Lysine 152 carries the post-translational modification N6-acetyllysine; alternate. At lysine 152 the chain carries N6-succinyllysine; alternate.

It belongs to the thioredoxin family. Monomer. As to expression, expressed in several tissues with the highest expression levels in heart, muscle, kidney and adrenal gland.

It is found in the mitochondrion. Functionally, important for the control of mitochondrial reactive oxygen species homeostasis, apoptosis regulation and cell viability. Is involved in various redox reactions including the reduction of protein disulfide bonds, through the reversible oxidation of its active center dithiol to a disulfide. This is Thioredoxin, mitochondrial (Txn2) from Rattus norvegicus (Rat).